The primary structure comprises 392 residues: HCLS1-binding protein 3 (392 aa).

Residue methionine 1 is modified to N-acetylmethionine. 3 positions are modified to phosphoserine: serine 3, serine 139, and serine 194. Positions 19–142 constitute a PX domain; sequence GLDLTVPQHQ…EFLGTRSPGA (124 aa). 3 disordered regions span residues 138 to 162, 174 to 265, and 319 to 364; these read RSPGAAGLTSRDSSVLDGTDSQTGN, DQVA…PLKL, and GAEP…KPQE. A compositionally biased stretch (acidic residues) spans 190-201; sequence DAEESLEEEEAL. Residues 208 to 220 are compositionally biased toward basic residues; that stretch reads RSKKPKKHPKVAV. A Phosphoserine modification is found at serine 249. A compositionally biased stretch (pro residues) spans 325–335; the sequence is KPQLKPKPPVA. An N6-acetyllysine modification is found at lysine 337.

As to quaternary structure, binds HCLS1. Interacts with the SH3 domain of HCLS1 in vitro.

In terms of biological role, may be a modulator of IL-2 signaling. In Homo sapiens (Human), this protein is HCLS1-binding protein 3 (HS1BP3).